We begin with the raw amino-acid sequence, 102 residues long: Small ribosomal subunit protein uS10 (102 aa).

Belongs to the universal ribosomal protein uS10 family. In terms of assembly, part of the 30S ribosomal subunit.

Its function is as follows. Involved in the binding of tRNA to the ribosomes. The protein is Small ribosomal subunit protein uS10 of Clavibacter michiganensis subsp. michiganensis (strain NCPPB 382).